A 598-amino-acid polypeptide reads, in one-letter code: 2-succinyl-5-enolpyruvyl-6-hydroxy-3-cyclohexene-1-carboxylate synthase (598 aa).

Belongs to the TPP enzyme family. MenD subfamily. In terms of assembly, homodimer. The cofactor is Mg(2+). Mn(2+) is required as a cofactor. Thiamine diphosphate serves as cofactor.

It carries out the reaction isochorismate + 2-oxoglutarate + H(+) = 5-enolpyruvoyl-6-hydroxy-2-succinyl-cyclohex-3-ene-1-carboxylate + CO2. Its pathway is quinol/quinone metabolism; 1,4-dihydroxy-2-naphthoate biosynthesis; 1,4-dihydroxy-2-naphthoate from chorismate: step 2/7. It functions in the pathway cofactor biosynthesis; phylloquinone biosynthesis. In terms of biological role, catalyzes the thiamine diphosphate-dependent decarboxylation of 2-oxoglutarate and the subsequent addition of the resulting succinic semialdehyde-thiamine pyrophosphate anion to isochorismate to yield 2-succinyl-5-enolpyruvyl-6-hydroxy-3-cyclohexene-1-carboxylate (SEPHCHC). The chain is 2-succinyl-5-enolpyruvyl-6-hydroxy-3-cyclohexene-1-carboxylate synthase from Prochlorococcus marinus (strain NATL2A).